Consider the following 210-residue polypeptide: MPYTSVSTYARALSGNKLPHVAAGDYENKLSTKIMKGILYVLTAGLAYGFTRVIEHYCNVTPKVAEFCANAGNIHNHLADAVRDGLFTIDVELSDGRMLTFEQLSLIAEGKPIVRISDGEHTVEVEGTFEEICMRLEEGFFEAPAYYDYDIDEKYKTVRERMAAYNALPQALGAIPCLEYYIARASNMQEAKAQWAADIKARYHNYLDNY.

It localises to the secreted. Its subcellular location is the host cytoplasm. Effector proteins function to alter host cell physiology and promote bacterial survival in host tissues. Could be required for passage of bacteria from the peritoneal cavity into the spleen, for survival and replication within host cells, or for avoiding host immune response. The polypeptide is Secreted effector protein SteA (steA) (Salmonella typhimurium (strain 14028s / SGSC 2262)).